The following is a 359-amino-acid chain: Phospho-N-acetylmuramoyl-pentapeptide-transferase (359 aa).

Transmembrane regions (helical) follow at residues 3–23, 55–75, 84–104, 117–137, 156–176, 190–210, 231–251, 255–275, 283–303, and 330–350; these read QILIAVAIAVAVSILLTPVLI, VAIVAGIWASYFGTHLVGVVI, GLLVLGLATALGAVGFLDDLI, TAKTVGILVAAVLFGVLALQF, IATVTLAPAVFVLFCVVVVSA, LAAGAMAMVCAAYVLITFWQF, LAIIAAATAGACIGFLWWNAA, IFMGDTGSLALGGIIAGLSVT, VVLGALFVAEVTSVVVQILAF, and VIIRFWLLTAIACGLGVALFY.

It belongs to the glycosyltransferase 4 family. MraY subfamily. The cofactor is Mg(2+).

It is found in the cell membrane. The catalysed reaction is UDP-N-acetyl-alpha-D-muramoyl-L-alanyl-gamma-D-glutamyl-meso-2,6-diaminopimeloyl-D-alanyl-D-alanine + di-trans,octa-cis-undecaprenyl phosphate = di-trans,octa-cis-undecaprenyl diphospho-N-acetyl-alpha-D-muramoyl-L-alanyl-D-glutamyl-meso-2,6-diaminopimeloyl-D-alanyl-D-alanine + UMP. The protein operates within cell wall biogenesis; peptidoglycan biosynthesis. In terms of biological role, catalyzes the initial step of the lipid cycle reactions in the biosynthesis of the cell wall peptidoglycan: transfers peptidoglycan precursor phospho-MurNAc-pentapeptide from UDP-MurNAc-pentapeptide onto the lipid carrier undecaprenyl phosphate, yielding undecaprenyl-pyrophosphoryl-MurNAc-pentapeptide, known as lipid I. The chain is Phospho-N-acetylmuramoyl-pentapeptide-transferase from Mycolicibacterium vanbaalenii (strain DSM 7251 / JCM 13017 / BCRC 16820 / KCTC 9966 / NRRL B-24157 / PYR-1) (Mycobacterium vanbaalenii).